A 798-amino-acid chain; its full sequence is Integrin beta-1-A (798 aa).

The first 21 residues, 1-21 (MAHYPVFTVGLLTCLVLCINA), serve as a signal peptide directing secretion. Residues 22 to 727 (QQGGTECLKA…VKEPECPSGP (706 aa)) lie on the Extracellular side of the membrane. The PSI domain maps to 27–77 (ECLKANAKSCGECIQAGPNCGWCTKVDFLQEGEPTSARCDDLAALKSKGCP). Intrachain disulfides connect Cys28-Cys46, Cys36-Cys464, Cys39-Cys65, Cys49-Cys76, Cys206-Cys212, Cys260-Cys300, Cys400-Cys414, Cys434-Cys462, Cys466-Cys486, Cys477-Cys489, Cys491-Cys500, Cys502-Cys533, Cys516-Cys531, Cys525-Cys536, Cys538-Cys553, Cys555-Cys576, Cys560-Cys574, Cys568-Cys579, Cys581-Cys590, Cys592-Cys615, Cys599-Cys613, Cys607-Cys618, Cys620-Cys630, Cys633-Cys636, Cys640-Cys691, Cys646-Cys665, Cys649-Cys661, and Cys699-Cys723. Residues 76 to 106 (CPEDDIQNPRGRKQKLKDIPITSKGKGERMD) form a disordered region. Asn109 and Asn131 each carry an N-linked (GlcNAc...) asparagine glycan. Residues 139–377 (DYPIDLYYLM…QLIIDSYNSL (239 aa)) enclose the VWFA domain. Mg(2+)-binding residues include Ser151 and Ser153. Ca(2+)-binding residues include Ser153, Asp156, Asp157, and Glu188. N-linked (GlcNAc...) asparagine glycans are attached at residues Asn211 and Asn223. 4 residues coordinate Ca(2+): Asn243, Asp245, Pro247, and Glu248. Mg(2+) is bound at residue Glu248. 2 N-linked (GlcNAc...) asparagine glycosylation sites follow: Asn268 and Asn362. The N-linked (GlcNAc...) asparagine glycan is linked to Asn416. I-EGF domains lie at 466-501 (CQDKGTPNSPECHFGNGTFECGACRCNDGRIGKECE), 502-554 (CSTD…KYCE), 555-591 (CDNFNCDRSNGLICGGKGICKCRVCECFPNYSGSACD), and 592-631 (CSEDTSTCMAKNGQICNGRGICDCGRCKCTDPKFQGPTCE). N-linked (GlcNAc...) asparagine glycosylation is present at Asn481. The N-linked (GlcNAc...) asparagine glycan is linked to Asn520. N-linked (GlcNAc...) asparagine glycosylation occurs at Asn584. Asn669 is a glycosylation site (N-linked (GlcNAc...) asparagine). Residues 728 to 751 (DIIPIVAGVVAGIVLIGLALLLIW) form a helical membrane-spanning segment. The Cytoplasmic segment spans residues 752 to 798 (KLLMIIHDRREFAKFEKEKMNAKWDTGENPIYKSAVTTVVNPKYEGK). The residue at position 783 (Tyr783) is a Phosphotyrosine.

Belongs to the integrin beta chain family. As to quaternary structure, heterodimer of an alpha and a beta subunit.

It localises to the cell membrane. The protein resides in the cell projection. Its subcellular location is the invadopodium membrane. The protein localises to the ruffle membrane. It is found in the melanosome. It localises to the cleavage furrow. The protein resides in the lamellipodium. Its subcellular location is the ruffle. In terms of biological role, beta integrins associate with alpha subunits to form receptor complexes that recognize the sequence R-G-D in a wide array of ligands. May be involved in osteoblast compaction. May play role in myoblast differentiation and fusion during skeletal myogenesis. The chain is Integrin beta-1-A (itgb1-a) from Xenopus laevis (African clawed frog).